A 22-amino-acid chain; its full sequence is Cysteine-rich venom protein notescatin (22 aa).

The segment covering 1 to 15 (SNKKDYQKEIVDKHN) has biased composition (basic and acidic residues). The tract at residues 1–22 (SNKKDYQKEIVDKHNALRRSVK) is disordered.

It belongs to the CRISP family. Post-translationally, contains 8 disulfide bonds. Expressed by the venom gland.

The protein resides in the secreted. This Notechis scutatus scutatus (Mainland tiger snake) protein is Cysteine-rich venom protein notescatin.